A 340-amino-acid chain; its full sequence is Ras association domain-containing protein 1 (340 aa).

At S2 the chain carries N-acetylserine. A Phosphoserine modification is found at S2. Residues S2–R115 are mediates interaction with E4F1. The segment at G51–C101 adopts a Phorbol-ester/DAG-type zinc-finger fold. Over residues S175 to L185 the composition is skewed to low complexity. Positions S175–T196 are disordered. The Ras-associating domain maps to R194 to S288. In terms of domain architecture, SARAH spans E290 to C337. Residues E311–E314 are MOAP1-binding.

In terms of assembly, interacts with MAP1S and XPA. Binds to the N-terminal of CDC20 during prometaphase. Binds to STK3/MST2 and STK4/MST1. Recruited to the TNFRSF1A and TNFRSF10A complexes in response to their respective cognate ligand, after internalization. Can self-associate. Part of a complex with MDM2, DAXX, RASSF1 and USP7. As to quaternary structure, interacts with MOAP1 and E4F1. Interacts with RSSF5 and probably associates with HRAS via a RSSF1 isoform A-RSSF5 heterodimer. Interacts (via C-terminus) with DAXX (via N-terminus); the interaction is independent of MDM2 and TP53. Interacts (via N-terminus) with MDM2 (via C-terminus); the interaction is independent of TP53. Interacts with RAB39A. Interacts with RAB39B; the interaction is weak. Interacts with ECM2. Interacts with RAB39B; the interaction is strong. Does not interact with RAB39A.

The protein resides in the cytoplasm. It is found in the cytoskeleton. Its subcellular location is the microtubule organizing center. It localises to the centrosome. The protein localises to the spindle. The protein resides in the spindle pole. It is found in the nucleus. In terms of biological role, potential tumor suppressor. Required for death receptor-dependent apoptosis. Mediates activation of Mediates activation of STK3/MST2 and STK4/MST1 during Fas-induced apoptosis by preventing their dephosphorylation. When associated with MOAP1, promotes BAX conformational change and translocation to mitochondrial membranes in response to TNF and TNFSF10 stimulation. Isoform A interacts with CDC20, an activator of the anaphase-promoting complex, APC, resulting in the inhibition of APC activity and mitotic progression. Inhibits proliferation by negatively regulating cell cycle progression at the level of G1/S-phase transition by regulating accumulation of cyclin D1 protein. Isoform C has been shown not to perform these roles, no function has been identified for this isoform. Isoform A disrupts interactions among MDM2, DAXX and USP7, thus contributing to the efficient activation of TP53 by promoting MDM2 self-ubiquitination in cell-cycle checkpoint control in response to DNA damage. In Mus musculus (Mouse), this protein is Ras association domain-containing protein 1.